The following is a 2472-amino-acid chain: Spectrin alpha chain, non-erythrocytic 1 (2472 aa).

An N-acetylmethionine modification is found at Met-1. Spectrin repeat units follow at residues 45 to 146 (RFQF…IKLL), 150 to 251 (KLVQ…QGKL), 256 to 358 (EVQR…ARLD), 361 to 465 (YRLQ…QYEQ), 468 to 570 (DLQL…AQLA), 574 to 676 (HLQQ…KLRE), 679 to 781 (QQQQ…QKLA), 785 to 888 (RLQQ…DLED), and 891 to 961 (QAQQ…QQVA). Residue Ser-587 is modified to Phosphoserine. Lys-637 bears the N6-acetyllysine mark. Position 803 is an N6-acetyllysine (Lys-803). 6 positions are modified to phosphoserine: Ser-924, Ser-982, Ser-999, Ser-1029, Ser-1031, and Ser-1041. One can recognise an SH3 domain in the interval 967–1026 (TGKELVLALYDYQEKSPREVTMKKGDILTLLNSTNKDWWKVEVNDRQGFVPAAYVKKLDP). The stretch at 1096-1166 (LFREANELQQ…LESEGLMAEE (71 aa)) is one Spectrin 10 repeat. Tyr-1176 is subject to Phosphotyrosine. Ser-1190, Ser-1207, Ser-1217, Ser-1291, Ser-1306, Ser-1323, and Ser-1338 each carry phosphoserine. Residues 1233–1336 (HEVQRFHRDA…RADQRKAKLG (104 aa)) form a Spectrin 11 repeat. Spectrin repeat units follow at residues 1339–1441 (HDLQ…RMML) and 1446–1549 (ELQL…KLGE). Residue Lys-1519 is modified to N6-acetyllysine. A phosphoserine mark is found at Ser-1550, Ser-1557, Ser-1578, Ser-1615, and Ser-1647. Spectrin repeat units lie at residues 1552 to 1656 (TLQQ…KLKE), 1659 to 1762 (KQQN…KLSE), 1764 to 1868 (HRLH…RLEE), 1871 to 1974 (EYQQ…KLDE), 1978 to 2081 (FLQF…KLLE), 2092 to 2194 (LFLT…LELQ), and 2206 to 2310 (LRQE…NLEQ). Residue Thr-2020 is modified to Phosphothreonine. Lys-2052 is subject to N6-acetyllysine. Thr-2066 carries the phosphothreonine modification. 3 consecutive EF-hand domains span residues 2323–2358 (EALK…LGYD), 2366–2401 (EPDP…RETE), and 2404–2439 (KSSE…EQAD). Asp-2336, Asp-2338, Ser-2340, Arg-2342, Glu-2347, Asp-2379, Asn-2381, Asp-2383, His-2385, and Glu-2390 together coordinate Ca(2+). Lys-2421 bears the N6-acetyllysine mark.

Belongs to the spectrin family. As to quaternary structure, like erythrocyte spectrin, the spectrin-like proteins are capable of forming dimers which can further associate to tetramers. Interacts (via C-terminal spectrin repeats) with TRPC4. Interacts with CALM and EMD. Interacts with isoform 1 of ACP1. Identified in a complex with ACTN4, CASK, IQGAP1, MAGI2, NPHS1 and SPTBN1. Interacts with SHANK3 (via ANK repeats). Interacts with CLN3; this interaction regulates the fodrin localization at the plasma membrane. Post-translationally, phosphorylation of Tyr-1176 decreases sensitivity to cleavage by calpain in vitro.

It localises to the cytoplasm. The protein resides in the cytoskeleton. The protein localises to the cell cortex. Functionally, fodrin, which seems to be involved in secretion, interacts with calmodulin in a calcium-dependent manner and is thus candidate for the calcium-dependent movement of the cytoskeleton at the membrane. The sequence is that of Spectrin alpha chain, non-erythrocytic 1 (Sptan1) from Mus musculus (Mouse).